A 257-amino-acid polypeptide reads, in one-letter code: Putative hydro-lyase YcsI (257 aa).

The protein belongs to the D-glutamate cyclase family.

The chain is Putative hydro-lyase YcsI (ycsI) from Bacillus subtilis (strain 168).